The sequence spans 95 residues: Co-chaperonin GroES (95 aa).

Belongs to the GroES chaperonin family. Heptamer of 7 subunits arranged in a ring. Interacts with the chaperonin GroEL.

Its subcellular location is the cytoplasm. Together with the chaperonin GroEL, plays an essential role in assisting protein folding. The GroEL-GroES system forms a nano-cage that allows encapsulation of the non-native substrate proteins and provides a physical environment optimized to promote and accelerate protein folding. GroES binds to the apical surface of the GroEL ring, thereby capping the opening of the GroEL channel. The protein is Co-chaperonin GroES of Novosphingobium aromaticivorans (strain ATCC 700278 / DSM 12444 / CCUG 56034 / CIP 105152 / NBRC 16084 / F199).